The chain runs to 331 residues: L-lactate dehydrogenase A chain (331 aa).

Residues 29-57 (GMVG…MEDK) and Arg-98 each bind NAD(+). The substrate site is built by Arg-105, Asn-137, and Arg-168. NAD(+) is bound at residue Asn-137. Catalysis depends on His-192, which acts as the Proton acceptor. Thr-247 provides a ligand contact to substrate.

Belongs to the LDH/MDH superfamily. LDH family. In terms of assembly, homotetramer.

It localises to the cytoplasm. The enzyme catalyses (S)-lactate + NAD(+) = pyruvate + NADH + H(+). The protein operates within fermentation; pyruvate fermentation to lactate; (S)-lactate from pyruvate: step 1/1. Functionally, interconverts simultaneously and stereospecifically pyruvate and lactate with concomitant interconversion of NADH and NAD(+). This Patagonotothen tessellata (Black southern cod) protein is L-lactate dehydrogenase A chain (ldha).